The primary structure comprises 542 residues: CTP synthase (542 aa).

The tract at residues Met1–Leu264 is amidoligase domain. Ser12 is a CTP binding site. Ser12 provides a ligand contact to UTP. Position 13–18 (Ser13–Ile18) interacts with ATP. Tyr53 contacts L-glutamine. Asp70 lines the ATP pocket. Residues Asp70 and Glu138 each coordinate Mg(2+). Residues Asp145–Glu147, Lys185–Gln190, and Lys221 contribute to the CTP site. Residues Lys185 to Gln190 and Lys221 each bind UTP. Lys237–Ala239 contacts ATP. Positions Tyr298–Lys541 constitute a Glutamine amidotransferase type-1 domain. Gly359 provides a ligand contact to L-glutamine. Catalysis depends on Cys386, which acts as the Nucleophile; for glutamine hydrolysis. L-glutamine is bound by residues Leu387 to Gln390, Glu410, and Arg467. Active-site residues include His514 and Glu516.

It belongs to the CTP synthase family. As to quaternary structure, homotetramer.

It carries out the reaction UTP + L-glutamine + ATP + H2O = CTP + L-glutamate + ADP + phosphate + 2 H(+). It catalyses the reaction L-glutamine + H2O = L-glutamate + NH4(+). The catalysed reaction is UTP + NH4(+) + ATP = CTP + ADP + phosphate + 2 H(+). The protein operates within pyrimidine metabolism; CTP biosynthesis via de novo pathway; CTP from UDP: step 2/2. Its activity is regulated as follows. Allosterically activated by GTP, when glutamine is the substrate; GTP has no effect on the reaction when ammonia is the substrate. The allosteric effector GTP functions by stabilizing the protein conformation that binds the tetrahedral intermediate(s) formed during glutamine hydrolysis. Inhibited by the product CTP, via allosteric rather than competitive inhibition. Catalyzes the ATP-dependent amination of UTP to CTP with either L-glutamine or ammonia as the source of nitrogen. Regulates intracellular CTP levels through interactions with the four ribonucleotide triphosphates. In Methanococcus aeolicus (strain ATCC BAA-1280 / DSM 17508 / OCM 812 / Nankai-3), this protein is CTP synthase.